The following is a 405-amino-acid chain: Tryptophan synthase beta chain (405 aa).

Lysine 98 carries the N6-(pyridoxal phosphate)lysine modification.

Belongs to the TrpB family. As to quaternary structure, tetramer of two alpha and two beta chains. The cofactor is pyridoxal 5'-phosphate.

The enzyme catalyses (1S,2R)-1-C-(indol-3-yl)glycerol 3-phosphate + L-serine = D-glyceraldehyde 3-phosphate + L-tryptophan + H2O. Its pathway is amino-acid biosynthesis; L-tryptophan biosynthesis; L-tryptophan from chorismate: step 5/5. Functionally, the beta subunit is responsible for the synthesis of L-tryptophan from indole and L-serine. The chain is Tryptophan synthase beta chain from Bradyrhizobium diazoefficiens (strain JCM 10833 / BCRC 13528 / IAM 13628 / NBRC 14792 / USDA 110).